The chain runs to 305 residues: MPTAIFLMGPTASGKTDLAIELCQALPCDIISVDSALIYRGMDIGTAKPSAAELALAPHRLIDILDPAVSYSAADFCKDALREMKEIAERGRIPLLVGGTMLYFKALLEGLSPLPSADPVIRAGIEEEAARLGWQALHDELVRIDPVAGARIHPNDPQRLSRALEVYRISGKTLTELTQVQGEGLPYRVLQFAIAPSDRAVLHQRIELRFDKMLQGGFEQEVRALYQRGDLTPDLPSIRCVGYRQMWDYLAGEVEYDEMRYRGIVATRQLAKRQMTWLRGWSDVTWLESGESGNLARVVARAGVA.

Residue 9 to 16 coordinates ATP; it reads GPTASGKT. 11-16 provides a ligand contact to substrate; the sequence is TASGKT. Interaction with substrate tRNA regions lie at residues 34–37, 158–162, and 239–244; these read DSAL, QRLSR, and RCVGYR.

The protein belongs to the IPP transferase family. Monomer. Mg(2+) serves as cofactor.

It carries out the reaction adenosine(37) in tRNA + dimethylallyl diphosphate = N(6)-dimethylallyladenosine(37) in tRNA + diphosphate. Its function is as follows. Catalyzes the transfer of a dimethylallyl group onto the adenine at position 37 in tRNAs that read codons beginning with uridine, leading to the formation of N6-(dimethylallyl)adenosine (i(6)A). The sequence is that of tRNA dimethylallyltransferase from Aeromonas hydrophila subsp. hydrophila (strain ATCC 7966 / DSM 30187 / BCRC 13018 / CCUG 14551 / JCM 1027 / KCTC 2358 / NCIMB 9240 / NCTC 8049).